The following is a 291-amino-acid chain: ATP synthase subunit a (291 aa).

The next 6 membrane-spanning stretches (helical) occupy residues 51-71 (FSFT…LLLV), 117-137 (FFPC…QGMI), 146-166 (HFLI…IVGF), 173-193 (FLSF…LVLL), 213-233 (MMAG…MLCM), and 239-259 (FIGD…ELGV).

This sequence belongs to the ATPase A chain family. As to quaternary structure, F-type ATPases have 2 components, CF(1) - the catalytic core - and CF(0) - the membrane proton channel. CF(1) has five subunits: alpha(3), beta(3), gamma(1), delta(1), epsilon(1). CF(0) has three main subunits: a, b and c.

It is found in the mitochondrion inner membrane. Functionally, mitochondrial membrane ATP synthase (F(1)F(0) ATP synthase or Complex V) produces ATP from ADP in the presence of a proton gradient across the membrane which is generated by electron transport complexes of the respiratory chain. F-type ATPases consist of two structural domains, F(1) - containing the extramembraneous catalytic core and F(0) - containing the membrane proton channel, linked together by a central stalk and a peripheral stalk. During catalysis, ATP synthesis in the catalytic domain of F(1) is coupled via a rotary mechanism of the central stalk subunits to proton translocation. Key component of the proton channel; it may play a direct role in the translocation of protons across the membrane. This Vicia faba (Broad bean) protein is ATP synthase subunit a (ATP6).